Here is a 192-residue protein sequence, read N- to C-terminus: MGLEAVVNEIREKGRKEVETIRAETRTDVEEILVDAQTRAAGIKASAQEEADRAVTHIINQEASAANLVVKRQVLNAQKTLLDQVYSASLAAVGDLPAEFQEKALTALLKRAVKEIKKGVVHANERDSPVVEEILSQLKMFSGYTMGAPVDIPGGIIVESNDGELQIDYSYRTFLDEIWESGLKDASDILFT.

The protein belongs to the V-ATPase E subunit family. In terms of assembly, has multiple subunits with at least A(3), B(3), C, D, E, F, H, I and proteolipid K(x).

The protein resides in the cell membrane. Functionally, component of the A-type ATP synthase that produces ATP from ADP in the presence of a proton gradient across the membrane. This chain is A-type ATP synthase subunit E, found in Methanoculleus marisnigri (strain ATCC 35101 / DSM 1498 / JR1).